The following is a 1537-amino-acid chain: Isocyanide synthase-NRPS hybrid crmA (1537 aa).

The segment at 1-502 (MFHKEAGISH…CVKAGYAALF (502 aa)) is isocyanide synthase domain. Residues 351–391 (PSVPVSPGMSSPSAASTSSSGASMQGSAATTPETHSPPTFT) form a disordered region. Over residues 352-381 (SVPVSPGMSSPSAASTSSSGASMQGSAATT) the composition is skewed to low complexity. Over residues 382–391 (PETHSPPTFT) the composition is skewed to polar residues. The segment at 573–752 (EAINDPFCFL…GNLIPPREDW (180 aa)) is adenylation. The Carrier domain maps to 941–1019 (SSAHSIEDNV…RLSAIIALLA (79 aa)). Ser-977 bears the O-(pantetheine 4'-phosphoryl)serine mark. Residues 1293–1526 (RCLKTTMFLV…LEMLVTDEEF (234 aa)) are transferase.

This sequence in the N-terminal section; belongs to the isocyanide synthase family. The protein in the C-terminal section; belongs to the NRP synthetase family.

It participates in secondary metabolite biosynthesis. Isocyanide synthase-NRPS hybrid; part of the crm gene cluster that mediates the biosynthesis of a yet unidentified copper-responsive metabolite. Converts valine into valine isocyanide that then contributes to two distinct biosynthetic pathways under copper-limiting conditions. Reaction of valine isocyanide with the imine intermediate of festuclavine results in formation of the amide bond in fumivaline A. In addition, valine isocyanide contributes to biosynthesis of a family of acylated sugar alcohols, the D-mannitol-derived fumicicolins. CrmA and associated products inhibit microbial growth from copper-starved A.fumigatus. The polypeptide is Isocyanide synthase-NRPS hybrid crmA (Aspergillus fumigatus (strain ATCC MYA-4609 / CBS 101355 / FGSC A1100 / Af293) (Neosartorya fumigata)).